A 785-amino-acid chain; its full sequence is Mitochondrial intermediate peptidase (785 aa).

The N-terminal 26 residues, 1–26 (MLKVTTSRPWVCSRCVRRQVQSRRRL), are a transit peptide targeting the mitochondrion. The disordered stretch occupies residues 26–51 (LATASTQYRESRPVPVDNSAPGAKRD). Histidine 566 contributes to the Zn(2+) binding site. Glutamate 567 is an active-site residue. Histidine 570 and histidine 573 together coordinate Zn(2+).

This sequence belongs to the peptidase M3 family. The cofactor is Zn(2+).

It is found in the mitochondrion matrix. The enzyme catalyses Release of an N-terminal octapeptide as second stage of processing of some proteins imported into the mitochondrion.. In terms of biological role, cleaves proteins, imported into the mitochondrion, to their mature size. While most mitochondrial precursor proteins are processed to the mature form in one step by mitochondrial processing peptidase (MPP), the sequential cleavage by MIP of an octapeptide after initial processing by MPP is a required step for a subgroup of nuclear-encoded precursor proteins destined for the matrix or the inner membrane. This is Mitochondrial intermediate peptidase (oct1) from Botryotinia fuckeliana (strain B05.10) (Noble rot fungus).